Here is a 1373-residue protein sequence, read N- to C-terminus: MAQQTFTGRKRVRKFFGHIREVAEMPNLIEVQKASYDQFLMVDEPVGGRLDEGLQAVFRSVFPISDFSNTSMLEFVRYEFEPPKYDVDECRQRGMTYAAPLKVTLRLIVFDIDEETGARSVKDIKEQDVYMGDIPLMTMNGTFVVNGTERVIVSQMHRSPGVFFDHDKGKTHSSGKLLFAARVIPYRGSWLDIEFDAKDIVFARIDRRRKIPVTSLMFALGLDGEEILSTFYKKIQYKKIKEGWRVPFDSNRFRGYSTINDLIDADTGKVVLEAGKKLTVRAARQLQEKGLKALRLSDEELVGNYLAEDLVNPKTGEIYAEAGEEITEKSLKGLNEQGYKELPLLDIDHVNIGAYIRNTLAADKNMTREDALFDIYRVMRPGEPPTIDSAQNMFQSLFFDSERYDLSAVGRVKMNMRLELDAPDTHRTLRKEDILAVIKTLVGLRDGRGEIDDIDHLGNRRVRSVGELMENQYRIGLLRMERAIKERMSSVDIDTVMPQDLINAKPAAAAVREFFGSSQLSQFMDQTNPLSEITHKRRLSALGPGGLTRERAGFEVRDVHPTHYGRICPIETPEGPNIGLINSLATFARVNKYGFVETPYRRCKDGRVTDEVVYLSAMEEGRYSVAQANVQLDPKGRFVEDLIVCRDGGTRDVVLIPADKVDFMDVSPKQLVSVAAALIPFLENDDANRALMGSNMQRQAVPLVRAEAPFVGTGMEGVVARDSGAAIAARRTGVIDQIDATRIVIRATDDLDPTKSGVDIYRLMKYQRSNQSTCINQRPLVKVGDMVAKGDIIADGPSTDLGELALGRNVLVAFMPWNGYNFEDSILLSERIVKDDVFTSIHIEEFEVMARDTKLGPEEITRDIPNVSEEALKNLDEAGIVYIGAEVRAGDILVGKITPKGESPMTPEEKLLRAIFGEKASDVRDTSLRVPPGVQGTIVEVRVFNRHGVDKDERALAIEREEIERLAKDRDDEQAILDRNVYGRLADLLENRQGIAGPKGFKKDTKITRAVIEEYPKSQWWLFASPNDKLMAEIEAMRKQYDESKKGLEQRFLDKVEKLQRGDELPPGVMKMVKVFVAVKRKIQPGDKMAGRHGNKGVVSKIVPIEDMPFLEDGTHADIVLNPLGVPSRMNVGQILETHLGWACAGLGKRIGQTIDAYYQKQDLKPMRETLRKIYGEDETIKSLNDAELLELARNLKPGVPIATPVFDGAKEADIEEMLKLAGLDASGQSTVYDGRTGDTFDRKVTVGYIYMLKLHHLVDDKIHARSIGPYSLVTQQPLGGKAQFGGQRFGEMEVWALEAYGAAYTLQEMLTVKSDDVAGRTKVYEAIVRGDDTFEAGIPESFNVLVKEMRSLGLNVDLHNSKLATPTSEAAE.

The protein belongs to the RNA polymerase beta chain family. The RNAP catalytic core consists of 2 alpha, 1 beta, 1 beta' and 1 omega subunit. When a sigma factor is associated with the core the holoenzyme is formed, which can initiate transcription.

The enzyme catalyses RNA(n) + a ribonucleoside 5'-triphosphate = RNA(n+1) + diphosphate. In terms of biological role, DNA-dependent RNA polymerase catalyzes the transcription of DNA into RNA using the four ribonucleoside triphosphates as substrates. In Rhodopseudomonas palustris (strain BisB18), this protein is DNA-directed RNA polymerase subunit beta.